A 341-amino-acid chain; its full sequence is MLRVAINGFGRIGRNVLRAVYESGKRDRIQVVAVNELAKPDAMAHLLQYDTSHGRFGKKISHDQQHIYVHHQNGEYDSIRILHLSEIPLLPWRDLGVDLVLDCTGVYGCQEDGQQHIDAGAKLVLFSHPGASDLDNTIIYGVNHETLTAEHKIVSNGSCTTNCIVPIIKVLDDAFGIDSGTITTIHSSMNDQQVIDAYHNDLRRTRAASQSIIPVDTKLHKGIERIFPKFSNKFEAISVRVPTVNVTAMDLSVTIKSNVKVNDVNQTIVNASQCTLRGIVDYTEAPLVSIDFNHDPHSAIVDGTQTRVSNGQLVKMLVWCDNEWGFANRMLDTALAMQATQ.

An NAD(+)-binding site is contributed by 11 to 12 (RI). Residues 158-160 (SCT), R204, 217-218 (TK), and R240 each bind substrate. C159 serves as the catalytic Nucleophile. N322 contributes to the NAD(+) binding site.

This sequence belongs to the glyceraldehyde-3-phosphate dehydrogenase family. Epd subfamily. Homotetramer.

The protein localises to the cytoplasm. It carries out the reaction D-erythrose 4-phosphate + NAD(+) + H2O = 4-phospho-D-erythronate + NADH + 2 H(+). Its pathway is cofactor biosynthesis; pyridoxine 5'-phosphate biosynthesis; pyridoxine 5'-phosphate from D-erythrose 4-phosphate: step 1/5. Catalyzes the NAD-dependent conversion of D-erythrose 4-phosphate to 4-phosphoerythronate. The protein is D-erythrose-4-phosphate dehydrogenase of Vibrio cholerae serotype O1 (strain ATCC 39541 / Classical Ogawa 395 / O395).